A 122-amino-acid chain; its full sequence is Large ribosomal subunit protein uL14 (122 aa).

The protein belongs to the universal ribosomal protein uL14 family. As to quaternary structure, part of the 50S ribosomal subunit. Forms a cluster with proteins L3 and L19. In the 70S ribosome, L14 and L19 interact and together make contacts with the 16S rRNA in bridges B5 and B8.

In terms of biological role, binds to 23S rRNA. Forms part of two intersubunit bridges in the 70S ribosome. The chain is Large ribosomal subunit protein uL14 from Rhizobium johnstonii (strain DSM 114642 / LMG 32736 / 3841) (Rhizobium leguminosarum bv. viciae).